Consider the following 62-residue polypeptide: Small ribosomal subunit protein bS21 (62 aa).

Residues 43-52 (VKKKLKSEAA) show a composition bias toward basic and acidic residues. Positions 43–62 (VKKKLKSEAARKRKAKKKRF) are disordered. Over residues 53–62 (RKRKAKKKRF) the composition is skewed to basic residues.

Belongs to the bacterial ribosomal protein bS21 family.

This Levilactobacillus brevis (strain ATCC 367 / BCRC 12310 / CIP 105137 / JCM 1170 / LMG 11437 / NCIMB 947 / NCTC 947) (Lactobacillus brevis) protein is Small ribosomal subunit protein bS21.